We begin with the raw amino-acid sequence, 237 residues long: uncharacterized protein (237 aa).

The disordered stretch occupies residues 213–237 (GQGKYLKLDSNTTENKTTKQNETGG). The span at 223-237 (NTTENKTTKQNETGG) shows a compositional bias: low complexity.

This is an uncharacterized protein from Methanothermobacter thermautotrophicus (Methanobacterium thermoformicicum).